The chain runs to 218 residues: Probable nicotinate-nucleotide adenylyltransferase (218 aa).

It belongs to the NadD family.

The enzyme catalyses nicotinate beta-D-ribonucleotide + ATP + H(+) = deamido-NAD(+) + diphosphate. The protein operates within cofactor biosynthesis; NAD(+) biosynthesis; deamido-NAD(+) from nicotinate D-ribonucleotide: step 1/1. In terms of biological role, catalyzes the reversible adenylation of nicotinate mononucleotide (NaMN) to nicotinic acid adenine dinucleotide (NaAD). This is Probable nicotinate-nucleotide adenylyltransferase from Sodalis glossinidius (strain morsitans).